The primary structure comprises 626 residues: Elongation factor 4 (626 aa).

One can recognise a tr-type G domain in the interval 14 to 195; that stretch reads SLIRNFCIIA…RIVVDVPAPT (182 aa). GTP contacts are provided by residues 26 to 31 and 142 to 145; these read DHGKST and NKID. The segment at 603 to 626 is disordered; that stretch reads LSTGEGGNDRDTKDKIRAAQKSEG. The span at 609 to 626 shows a compositional bias: basic and acidic residues; that stretch reads GNDRDTKDKIRAAQKSEG.

This sequence belongs to the TRAFAC class translation factor GTPase superfamily. Classic translation factor GTPase family. LepA subfamily.

The protein resides in the cell membrane. It catalyses the reaction GTP + H2O = GDP + phosphate + H(+). In terms of biological role, required for accurate and efficient protein synthesis under certain stress conditions. May act as a fidelity factor of the translation reaction, by catalyzing a one-codon backward translocation of tRNAs on improperly translocated ribosomes. Back-translocation proceeds from a post-translocation (POST) complex to a pre-translocation (PRE) complex, thus giving elongation factor G a second chance to translocate the tRNAs correctly. Binds to ribosomes in a GTP-dependent manner. This is Elongation factor 4 from Bifidobacterium animalis subsp. lactis (strain AD011).